The following is a 392-amino-acid chain: Heat-inducible transcription repressor HrcA (392 aa).

The protein belongs to the HrcA family.

In terms of biological role, negative regulator of class I heat shock genes (grpE-dnaK-dnaJ and groELS operons). Prevents heat-shock induction of these operons. This is Heat-inducible transcription repressor HrcA from Chlamydia trachomatis serovar A (strain ATCC VR-571B / DSM 19440 / HAR-13).